The sequence spans 397 residues: Carbamoyl phosphate synthase small chain (397 aa).

Residues 1–204 (MSPLLPSFPF…PAYRTLDTSK (204 aa)) form a CPSase region. S53, G256, and G258 together coordinate L-glutamine. Residues 208–395 (KVVAYDFGVK…MELMNAAKKE (188 aa)) enclose the Glutamine amidotransferase type-1 domain. The active-site Nucleophile is the C284. Residues L285, Q288, N326, G328, and F329 each coordinate L-glutamine. Residues H368 and E370 contribute to the active site.

The protein belongs to the CarA family. Composed of two chains; the small (or glutamine) chain promotes the hydrolysis of glutamine to ammonia, which is used by the large (or ammonia) chain to synthesize carbamoyl phosphate. Tetramer of heterodimers (alpha,beta)4.

The catalysed reaction is hydrogencarbonate + L-glutamine + 2 ATP + H2O = carbamoyl phosphate + L-glutamate + 2 ADP + phosphate + 2 H(+). It carries out the reaction L-glutamine + H2O = L-glutamate + NH4(+). It participates in amino-acid biosynthesis; L-arginine biosynthesis; carbamoyl phosphate from bicarbonate: step 1/1. It functions in the pathway pyrimidine metabolism; UMP biosynthesis via de novo pathway; (S)-dihydroorotate from bicarbonate: step 1/3. In terms of biological role, small subunit of the glutamine-dependent carbamoyl phosphate synthetase (CPSase). CPSase catalyzes the formation of carbamoyl phosphate from the ammonia moiety of glutamine, carbonate, and phosphate donated by ATP, constituting the first step of 2 biosynthetic pathways, one leading to arginine and/or urea and the other to pyrimidine nucleotides. The small subunit (glutamine amidotransferase) binds and cleaves glutamine to supply the large subunit with the substrate ammonia. This Polynucleobacter asymbioticus (strain DSM 18221 / CIP 109841 / QLW-P1DMWA-1) (Polynucleobacter necessarius subsp. asymbioticus) protein is Carbamoyl phosphate synthase small chain.